Reading from the N-terminus, the 274-residue chain is MQFSKMHGLGNDFMVVDAVTQNVFFSPELIRRLADRHLGVGFDQLLVVEPPYDPELDFHYRIFNADGSEVAQCGNGARCFARFVRLKGLTNKRDIRVSTANGRMVLTVTDDDLVRVNMGEPNFEPSAVPFRANKAEKTYIMRAAEQTILCGVVSMGNPHCVIQVDDVDTAAVETLGPVLESHERFPERANIGFMQVVKREHIRLRVYERGAGETQACGSGACAAVAVGIQQGLLAEEVRVELPGGRLDIAWKGPGHPLYMTGPAVHVYDGFIHL.

Residues Asn-11, Gln-44, and Asn-64 each coordinate substrate. The active-site Proton donor is Cys-73. Substrate is bound by residues 74–75 (GN), Asn-157, Asn-190, and 208–209 (ER). Cys-217 functions as the Proton acceptor in the catalytic mechanism. Residue 218–219 (GS) participates in substrate binding.

It belongs to the diaminopimelate epimerase family. As to quaternary structure, homodimer.

The protein localises to the cytoplasm. It carries out the reaction (2S,6S)-2,6-diaminopimelate = meso-2,6-diaminopimelate. The protein operates within amino-acid biosynthesis; L-lysine biosynthesis via DAP pathway; DL-2,6-diaminopimelate from LL-2,6-diaminopimelate: step 1/1. In terms of biological role, catalyzes the stereoinversion of LL-2,6-diaminopimelate (L,L-DAP) to meso-diaminopimelate (meso-DAP), a precursor of L-lysine and an essential component of the bacterial peptidoglycan. The chain is Diaminopimelate epimerase from Escherichia fergusonii (strain ATCC 35469 / DSM 13698 / CCUG 18766 / IAM 14443 / JCM 21226 / LMG 7866 / NBRC 102419 / NCTC 12128 / CDC 0568-73).